Here is a 337-residue protein sequence, read N- to C-terminus: Cytochrome P450 monooxygenase dpmpJ (337 aa).

A helical membrane pass occupies residues 4–24 (LILHHPYASLAAGILLYFFCL). N-linked (GlcNAc...) asparagine glycosylation occurs at Asn-158.

It belongs to the cytochrome P450 family. Heme is required as a cofactor.

The protein resides in the membrane. Its pathway is secondary metabolite biosynthesis; terpenoid biosynthesis. Its function is as follows. Cytochrome P450 monooxygenase; part of the gene cluster that mediates the biosynthesis of diterpenoid pyrones. The first step of the pathway is the synthesis of the alpha-pyrone moiety by the polyketide synthase dpmpA via condensation of one acetyl-CoA starter unit with 3 malonyl-CoA units and 2 methylations. The alpha-pyrone is then combined with geranylgeranyl pyrophosphate (GGPP) formed by the GGPP synthase dpmpD through the action of the prenyltransferase dpmpC to yield a linear alpha-pyrone diterpenoid. Subsequent steps in the diterpenoid pyrone biosynthetic pathway involve the decalin core formation, which is initiated by the epoxidation of the C10-C11 olefin by the FAD-dependent oxidoreductase dpmpE, and is followed by a cyclization cascade catalyzed by the terpene cyclase dpmpB. The short chain dehydrogenase/reductase dpmpG then oxidizes the 8S hydroxy group to a ketone and the short chain dehydrogenase/reductase dpmpH reduces the ketone to the 8R hydroxy group to yield higginsianin B. Higginsianin B is further methylated by the methyltransferase dpmpI to produce the intermediate named FDDP B. The cytochrome P450 monooxygenase dpmpJ then oxidizes the C-26 methyl to primary alcohol, producing the final diterpenoid pyrone with a C-26 primary alcohol on the gamma-pyrone moiety named FDDP C. The sequence is that of Cytochrome P450 monooxygenase dpmpJ from Macrophomina phaseolina (strain MS6) (Charcoal rot fungus).